The primary structure comprises 256 residues: Chlorophyll a-b binding protein CP24 10B, chloroplastic (256 aa).

The transit peptide at 1-45 directs the protein to the chloroplast; that stretch reads MTTTSATAVLNGLSSSFLTGGKKTQALLGAHVTARVTTPKRFVVA. A run of 2 helical transmembrane segments spans residues 106 to 126 and 134 to 154; these read WAMA…IPWF and AIAP…MGWV.

This sequence belongs to the ELIP/psbS family.

It localises to the plastid. The protein resides in the chloroplast thylakoid membrane. This Solanum lycopersicum (Tomato) protein is Chlorophyll a-b binding protein CP24 10B, chloroplastic (CAP10B).